Reading from the N-terminus, the 255-residue chain is Cytochrome c oxidase subunit 3 (255 aa).

The next 7 helical transmembrane spans lie at 12-29, 57-77, 91-111, 126-146, 155-175, 196-216, and 235-255; these read INII…STGL, LKYL…INGI, IFGM…WGFF, LEAF…ISLI, YFEV…FLSF, FNVL…FALM, and GMYW…LFLL.

The protein belongs to the cytochrome c oxidase subunit 3 family. Component of the cytochrome c oxidase (complex IV, CIV), a multisubunit enzyme composed of a catalytic core of 3 subunits and several supernumerary subunits. The complex exists as a monomer or a dimer and forms supercomplexes (SCs) in the inner mitochondrial membrane with ubiquinol-cytochrome c oxidoreductase (cytochrome b-c1 complex, complex III, CIII).

The protein localises to the mitochondrion inner membrane. It catalyses the reaction 4 Fe(II)-[cytochrome c] + O2 + 8 H(+)(in) = 4 Fe(III)-[cytochrome c] + 2 H2O + 4 H(+)(out). In terms of biological role, component of the cytochrome c oxidase, the last enzyme in the mitochondrial electron transport chain which drives oxidative phosphorylation. The respiratory chain contains 3 multisubunit complexes succinate dehydrogenase (complex II, CII), ubiquinol-cytochrome c oxidoreductase (cytochrome b-c1 complex, complex III, CIII) and cytochrome c oxidase (complex IV, CIV), that cooperate to transfer electrons derived from NADH and succinate to molecular oxygen, creating an electrochemical gradient over the inner membrane that drives transmembrane transport and the ATP synthase. Cytochrome c oxidase is the component of the respiratory chain that catalyzes the reduction of oxygen to water. Electrons originating from reduced cytochrome c in the intermembrane space (IMS) are transferred via the dinuclear copper A center (CU(A)) of subunit 2 and heme A of subunit 1 to the active site in subunit 1, a binuclear center (BNC) formed by heme A3 and copper B (CU(B)). The BNC reduces molecular oxygen to 2 water molecules using 4 electrons from cytochrome c in the IMS and 4 protons from the mitochondrial matrix. This Theileria annulata protein is Cytochrome c oxidase subunit 3 (MT-CO3).